The sequence spans 183 residues: Ribosome rescue factor SmrB (183 aa).

One can recognise a Smr domain in the interval 98-173 (LDLHGLTQLQ…GDAALLVLIE (76 aa)).

It belongs to the SmrB family. Associates with collided ribosomes, but not with correctly translating polysomes.

Its function is as follows. Acts as a ribosome collision sensor. Detects stalled/collided disomes (pairs of ribosomes where the leading ribosome is stalled and a second ribosome has collided with it) and endonucleolytically cleaves mRNA at the 5' boundary of the stalled ribosome. Stalled/collided disomes form a new interface (primarily via the 30S subunits) that binds SmrB. Cleaved mRNA becomes available for tmRNA ligation, leading to ribosomal subunit dissociation and rescue of stalled ribosomes. The polypeptide is Ribosome rescue factor SmrB (Escherichia coli O157:H7).